The primary structure comprises 307 residues: Pantothenate kinase (307 aa).

ATP is bound at residue 90 to 97 (GSVAVGKS).

It belongs to the prokaryotic pantothenate kinase family.

The protein localises to the cytoplasm. The enzyme catalyses (R)-pantothenate + ATP = (R)-4'-phosphopantothenate + ADP + H(+). It functions in the pathway cofactor biosynthesis; coenzyme A biosynthesis; CoA from (R)-pantothenate: step 1/5. The protein is Pantothenate kinase of Limosilactobacillus fermentum (strain NBRC 3956 / LMG 18251) (Lactobacillus fermentum).